A 344-amino-acid chain; its full sequence is Dihydroorotase (344 aa).

Residues His14 and His16 each coordinate Zn(2+). Residues 16–18 (HLR) and Asn42 each bind substrate. Zn(2+)-binding residues include Lys100, His137, and His175. An N6-carboxylysine modification is found at Lys100. His137 is a substrate binding site. Leu220 contributes to the substrate binding site. Position 248 (Asp248) interacts with Zn(2+). The active site involves Asp248. Positions 252 and 264 each coordinate substrate.

It belongs to the metallo-dependent hydrolases superfamily. DHOase family. Class II DHOase subfamily. Homodimer. Zn(2+) serves as cofactor.

The enzyme catalyses (S)-dihydroorotate + H2O = N-carbamoyl-L-aspartate + H(+). It functions in the pathway pyrimidine metabolism; UMP biosynthesis via de novo pathway; (S)-dihydroorotate from bicarbonate: step 3/3. Its function is as follows. Catalyzes the reversible cyclization of carbamoyl aspartate to dihydroorotate. The chain is Dihydroorotase from Roseobacter denitrificans (strain ATCC 33942 / OCh 114) (Erythrobacter sp. (strain OCh 114)).